The chain runs to 496 residues: Acyltransferase clz6 (496 aa).

H163 (proton acceptor) is an active-site residue.

The protein belongs to the plant acyltransferase family. Monomer.

It functions in the pathway secondary metabolite biosynthesis. In terms of biological role, acyltransferase; part of the gene cluster that mediates the biosynthesis of squalestatin S1 (SQS1, also known as zaragozic acid A), a heavily oxidized fungal polyketide that offers potent cholesterol lowering activity by targeting squalene synthase (SS). SQS1 is composed of a 2,8-dioxobicyclic[3.2.1]octane-3,4,5-tricarboxyclic acid core that is connected to two lipophilic polyketide arms. These initial steps feature the priming of an unusual benzoic acid starter unit onto the highly reducing polyketide synthase clz14, followed by oxaloacetate extension and product release to generate a tricarboxylic acid containing product. The phenylalanine ammonia lyase (PAL) clz10 and the acyl-CoA ligase clz12 are involved in transforming phenylalanine into benzoyl-CoA. The citrate synthase-like protein clz17 is involved in connecting the C-alpha-carbons of the hexaketide chain and oxaloacetate to afford the tricarboxylic acid unit. The potential hydrolytic enzymes, clz11 and clz13, are in close proximity to pks2 and may participate in product release. On the other side, the tetraketide arm is synthesized by a the squalestatin tetraketide synthase clz2 and enzymatically esterified to the core in the last biosynthetic step, by the acetyltransferase clz6. The biosynthesis of the tetraketide must involve 3 rounds of chain extension. After the first and second rounds methyl-transfer occurs, and in all rounds of extension the ketoreductase and dehydratase are active. The enoyl reductase and C-MeT of clz2 are not active in the final round of extension. The acetyltransferase clz6 appears to have a broad substrate selectivity for its acyl CoA substrate, allowing the in vitro synthesis of novel squalestatins. The biosynthesis of SQS1 requires several oxidative steps likely performed by oxidoreductases clz3, clz15 and clz16. Finally, in support of the identification of the cluster as being responsible for SQS1 production, the cluster contains a gene encoding a putative squalene synthase (SS) clz20, suggesting a likely mechanism for self-resistance. The chain is Acyltransferase clz6 from Cochliobolus lunatus (Filamentous fungus).